Reading from the N-terminus, the 178-residue chain is ATP-dependent protease subunit HslV (178 aa).

Residue T7 is part of the active site. 3 residues coordinate Na(+): G162, C165, and T168.

This sequence belongs to the peptidase T1B family. HslV subfamily. As to quaternary structure, a double ring-shaped homohexamer of HslV is capped on each side by a ring-shaped HslU homohexamer. The assembly of the HslU/HslV complex is dependent on binding of ATP.

Its subcellular location is the cytoplasm. It catalyses the reaction ATP-dependent cleavage of peptide bonds with broad specificity.. Allosterically activated by HslU binding. Protease subunit of a proteasome-like degradation complex believed to be a general protein degrading machinery. The sequence is that of ATP-dependent protease subunit HslV from Janthinobacterium sp. (strain Marseille) (Minibacterium massiliensis).